The following is a 123-amino-acid chain: UPF0102 protein Mflv_4140 (123 aa).

The protein belongs to the UPF0102 family.

The sequence is that of UPF0102 protein Mflv_4140 from Mycolicibacterium gilvum (strain PYR-GCK) (Mycobacterium gilvum (strain PYR-GCK)).